Reading from the N-terminus, the 189-residue chain is Pyridoxal 5'-phosphate synthase subunit PdxT (189 aa).

47-49 contacts L-glutamine; sequence GES. C79 acts as the Nucleophile in catalysis. Residues R106 and 135–136 contribute to the L-glutamine site; that span reads IR. Residues H171 and E173 each act as charge relay system in the active site.

Belongs to the glutaminase PdxT/SNO family. In the presence of PdxS, forms a dodecamer of heterodimers. Only shows activity in the heterodimer.

It carries out the reaction aldehydo-D-ribose 5-phosphate + D-glyceraldehyde 3-phosphate + L-glutamine = pyridoxal 5'-phosphate + L-glutamate + phosphate + 3 H2O + H(+). The catalysed reaction is L-glutamine + H2O = L-glutamate + NH4(+). It participates in cofactor biosynthesis; pyridoxal 5'-phosphate biosynthesis. In terms of biological role, catalyzes the hydrolysis of glutamine to glutamate and ammonia as part of the biosynthesis of pyridoxal 5'-phosphate. The resulting ammonia molecule is channeled to the active site of PdxS. The chain is Pyridoxal 5'-phosphate synthase subunit PdxT from Thermoanaerobacter pseudethanolicus (strain ATCC 33223 / 39E) (Clostridium thermohydrosulfuricum).